The sequence spans 361 residues: Putative agmatine deiminase (361 aa).

Residue cysteine 354 is the Amidino-cysteine intermediate of the active site.

The protein belongs to the agmatine deiminase family.

It carries out the reaction agmatine + H2O = N-carbamoylputrescine + NH4(+). The protein is Putative agmatine deiminase of Streptococcus pneumoniae (strain Taiwan19F-14).